The following is a 149-amino-acid chain: Flavodoxin YqcA (149 aa).

One can recognise a Flavodoxin-like domain in the interval 4–145 (IGIFVGTMYG…ESNPWVEQWG (142 aa)). Residues 10-15 (TMYGNS) and 99-101 (NFC) each bind FMN.

Belongs to the flavodoxin family. MioC subfamily. In terms of assembly, monomer. It depends on FMN as a cofactor.

Probable electron transporter. This Escherichia coli (strain K12) protein is Flavodoxin YqcA (yqcA).